The following is a 280-amino-acid chain: Chaperone protein LppX (280 aa).

The signal sequence occupies residues 1 to 18; sequence MRKWLIFLLIAAVAGLSA. Cys-19 is lipidated: N-palmitoyl cysteine. A lipid anchor (S-diacylglycerol cysteine) is attached at Cys-19.

The protein localises to the cell membrane. Is required for the expression of the adjacently encoded xylanase Xyn11E in an active form. LppX seems to act as a specific chaperone necessary for the correct folding of the xylanase during secretion across the cytoplasmic membrane. This chain is Chaperone protein LppX, found in Paenibacillus barcinonensis.